A 257-amino-acid polypeptide reads, in one-letter code: MSQPVKIAIAGANGRMGRAVAQALEGRSDAVVAARFERPGDAGEGLVARETALAAAEAVIDFTLPEASVALAEEAAANGGPALVIGSTGFSDEQLDRIDAAATKIVIVRSGNYSLGVNMLMGLVRQAAAALPAQDWDIEVFEAHHKRKIDAPSGTALMLGEAAAEGRGINLAKVSDRGRDGVTGPRKDGDIGFSVVRGGGIIGEHSVIFAGESESLTLSHSAIDRGLFARGAIAAAVWVKGKPPGLYDMQDVLGFKK.

Residues G11–M16 and E37 each bind NAD(+). R38 is a binding site for NADP(+). Residues G86–T88 and S110–Y113 contribute to the NAD(+) site. Residue H144 is the Proton donor/acceptor of the active site. H145 is a (S)-2,3,4,5-tetrahydrodipicolinate binding site. K148 functions as the Proton donor in the catalytic mechanism. A (S)-2,3,4,5-tetrahydrodipicolinate-binding site is contributed by G154–T155.

The protein belongs to the DapB family.

Its subcellular location is the cytoplasm. The enzyme catalyses (S)-2,3,4,5-tetrahydrodipicolinate + NAD(+) + H2O = (2S,4S)-4-hydroxy-2,3,4,5-tetrahydrodipicolinate + NADH + H(+). The catalysed reaction is (S)-2,3,4,5-tetrahydrodipicolinate + NADP(+) + H2O = (2S,4S)-4-hydroxy-2,3,4,5-tetrahydrodipicolinate + NADPH + H(+). The protein operates within amino-acid biosynthesis; L-lysine biosynthesis via DAP pathway; (S)-tetrahydrodipicolinate from L-aspartate: step 4/4. Its function is as follows. Catalyzes the conversion of 4-hydroxy-tetrahydrodipicolinate (HTPA) to tetrahydrodipicolinate. In Caulobacter vibrioides (strain ATCC 19089 / CIP 103742 / CB 15) (Caulobacter crescentus), this protein is 4-hydroxy-tetrahydrodipicolinate reductase.